A 369-amino-acid chain; its full sequence is Peptide chain release factor subunit 1 (369 aa).

This sequence belongs to the eukaryotic release factor 1 family. Heterodimer of two subunits, one of which binds GTP.

The protein resides in the cytoplasm. Directs the termination of nascent peptide synthesis (translation) in response to the termination codons UAA, UAG and UGA. This is Peptide chain release factor subunit 1 (prf1) from Saccharolobus solfataricus (strain ATCC 35092 / DSM 1617 / JCM 11322 / P2) (Sulfolobus solfataricus).